A 420-amino-acid chain; its full sequence is ATP-dependent Clp protease ATP-binding subunit ClpX (420 aa).

Residues 4–57 enclose the ClpX-type ZB domain; sequence KTPGNNGKQKLFCSFCGKEQDAVKRLVAGPGVYICDECISLCNEIIAEDHEHSH. Positions 16, 19, 38, and 41 each coordinate Zn(2+). ATP is bound at residue 122 to 129; the sequence is PTGSGKTL.

This sequence belongs to the ClpX chaperone family. As to quaternary structure, component of the ClpX-ClpP complex. Forms a hexameric ring that, in the presence of ATP, binds to fourteen ClpP subunits assembled into a disk-like structure with a central cavity, resembling the structure of eukaryotic proteasomes.

Its function is as follows. ATP-dependent specificity component of the Clp protease. It directs the protease to specific substrates. Can perform chaperone functions in the absence of ClpP. The sequence is that of ATP-dependent Clp protease ATP-binding subunit ClpX from Leptospira interrogans serogroup Icterohaemorrhagiae serovar copenhageni (strain Fiocruz L1-130).